The primary structure comprises 54 residues: Ovomucoid (54 aa).

Residues 4-54 (VDCSDHPKPVCSLEYMPLCGSDSKTYSNKCDFCNAVVESNGTLTLSHFGKC) form the Kazal-like domain. 3 disulfides stabilise this stretch: C6/C36, C14/C33, and C22/C54. Residue N43 is glycosylated (N-linked (GlcNAc...) asparagine).

Its subcellular location is the secreted. The protein is Ovomucoid of Rhea americana (Greater rhea).